A 390-amino-acid polypeptide reads, in one-letter code: Na(+)/H(+) antiporter NhaA 1 (390 aa).

Helical transmembrane passes span 14-34, 59-79, 94-114, 125-145, 154-174, 179-199, 205-225, 260-280, 295-315, 328-348, and 362-382; these read SGILIILAMILALILANNGVL, TILWVNDGLMAIFFFFIGLEL, VALPSIAGIGGVIVPAVIFYV, GWAIPTVSDTAFALAVLFLLG, LFLLSLAIIDDVAAIIIIAIF, LSIISLFISFCAIVILTILNY, IYIYLLCGIVLWVSVLMSGIH, PIVAFLILPIFAFSNAGVVFS, IIFGLFIGKQIGVFSFAFLAI, WLHLYGLSILTGVGMSMSLFI, and ANKIAILLASTMCAVTGYFVL.

It belongs to the NhaA Na(+)/H(+) (TC 2.A.33) antiporter family.

The protein resides in the cell inner membrane. The enzyme catalyses Na(+)(in) + 2 H(+)(out) = Na(+)(out) + 2 H(+)(in). Na(+)/H(+) antiporter that extrudes sodium in exchange for external protons. In Campylobacter fetus subsp. fetus (strain 82-40), this protein is Na(+)/H(+) antiporter NhaA 1.